The following is a 445-amino-acid chain: Phosphoglucosamine mutase (445 aa).

The active-site Phosphoserine intermediate is serine 99. Mg(2+) contacts are provided by serine 99, aspartate 242, aspartate 244, and aspartate 246. Phosphoserine is present on serine 99.

It belongs to the phosphohexose mutase family. The cofactor is Mg(2+). In terms of processing, activated by phosphorylation.

It catalyses the reaction alpha-D-glucosamine 1-phosphate = D-glucosamine 6-phosphate. In terms of biological role, catalyzes the conversion of glucosamine-6-phosphate to glucosamine-1-phosphate. The sequence is that of Phosphoglucosamine mutase from Helicobacter pylori (strain P12).